Consider the following 98-residue polypeptide: Small proline-rich protein 2B (98 aa).

5 consecutive repeat copies span residues 21 to 29 (PKCPEPCPP), 30 to 38 (PKCPEPCPP), 39 to 47 (PVCCEPCPP), 48 to 56 (PKCPEPCPP), and 57 to 65 (PVCCEPCPP). Residues 21 to 65 (PKCPEPCPPPKCPEPCPPPVCCEPCPPPKCPEPCPPPVCCEPCPP) form a 5 X 9 AA approximate tandem repeats region.

It belongs to the cornifin (SPRR) family. Expressed in uterus.

The protein resides in the cytoplasm. In terms of biological role, cross-linked envelope protein of keratinocytes. It is a keratinocyte protein that first appears in the cell cytosol, but ultimately becomes cross-linked to membrane proteins by transglutaminase. All that results in the formation of an insoluble envelope beneath the plasma membrane. This is Small proline-rich protein 2B (Sprr2b) from Mus musculus (Mouse).